Consider the following 111-residue polypeptide: T cell receptor alpha variable 18 (111 aa).

Positions 1 to 20 (MLSASCSGLVILLIFRRTSG) are cleaved as a signal peptide. In terms of domain architecture, Ig-like spans 21 to 111 (DSVTQTEGPV…DSAVYYCALR (91 aa)). N41 carries N-linked (GlcNAc...) asparagine glycosylation. A disulfide bridge connects residues C42 and C108.

Alpha-beta TR is a heterodimer composed of an alpha and beta chain; disulfide-linked. The alpha-beta TR is associated with the transmembrane signaling CD3 coreceptor proteins to form the TR-CD3 (TcR or TCR). The assembly of alpha-beta TR heterodimers with CD3 occurs in the endoplasmic reticulum where a single alpha-beta TR heterodimer associates with one CD3D-CD3E heterodimer, one CD3G-CD3E heterodimer and one CD247 homodimer forming a stable octameric structure. CD3D-CD3E and CD3G-CD3E heterodimers preferentially associate with TR alpha and TR beta chains, respectively. The association of the CD247 homodimer is the last step of TcR assembly in the endoplasmic reticulum and is required for transport to the cell surface.

It localises to the cell membrane. Its function is as follows. V region of the variable domain of T cell receptor (TR) alpha chain that participates in the antigen recognition. Alpha-beta T cell receptors are antigen specific receptors which are essential to the immune response and are present on the cell surface of T lymphocytes. Recognize peptide-major histocompatibility (MH) (pMH) complexes that are displayed by antigen presenting cells (APC), a prerequisite for efficient T cell adaptive immunity against pathogens. Binding of alpha-beta TR to pMH complex initiates TR-CD3 clustering on the cell surface and intracellular activation of LCK that phosphorylates the ITAM motifs of CD3G, CD3D, CD3E and CD247 enabling the recruitment of ZAP70. In turn ZAP70 phosphorylates LAT, which recruits numerous signaling molecules to form the LAT signalosome. The LAT signalosome propagates signal branching to three major signaling pathways, the calcium, the mitogen-activated protein kinase (MAPK) kinase and the nuclear factor NF-kappa-B (NF-kB) pathways, leading to the mobilization of transcription factors that are critical for gene expression and essential for T cell growth and differentiation. The T cell repertoire is generated in the thymus, by V-(D)-J rearrangement. This repertoire is then shaped by intrathymic selection events to generate a peripheral T cell pool of self-MH restricted, non-autoaggressive T cells. Post-thymic interaction of alpha-beta TR with the pMH complexes shapes TR structural and functional avidity. The sequence is that of T cell receptor alpha variable 18 from Homo sapiens (Human).